The following is a 156-amino-acid chain: Deoxyuridine 5'-triphosphate nucleotidohydrolase (156 aa).

Residues 76–78 (RSG), Asn89, 93–95 (TVD), and Lys103 each bind substrate.

Belongs to the dUTPase family. Requires Mg(2+) as cofactor.

It catalyses the reaction dUTP + H2O = dUMP + diphosphate + H(+). The protein operates within pyrimidine metabolism; dUMP biosynthesis; dUMP from dCTP (dUTP route): step 2/2. In terms of biological role, this enzyme is involved in nucleotide metabolism: it produces dUMP, the immediate precursor of thymidine nucleotides and it decreases the intracellular concentration of dUTP so that uracil cannot be incorporated into DNA. The sequence is that of Deoxyuridine 5'-triphosphate nucleotidohydrolase from Agrobacterium fabrum (strain C58 / ATCC 33970) (Agrobacterium tumefaciens (strain C58)).